The following is a 331-amino-acid chain: Phenylalanine--tRNA ligase alpha subunit (331 aa).

Residue E252 participates in Mg(2+) binding.

The protein belongs to the class-II aminoacyl-tRNA synthetase family. Phe-tRNA synthetase alpha subunit type 1 subfamily. As to quaternary structure, tetramer of two alpha and two beta subunits. Mg(2+) is required as a cofactor.

It is found in the cytoplasm. It carries out the reaction tRNA(Phe) + L-phenylalanine + ATP = L-phenylalanyl-tRNA(Phe) + AMP + diphosphate + H(+). This is Phenylalanine--tRNA ligase alpha subunit from Xanthomonas axonopodis pv. citri (strain 306).